A 327-amino-acid polypeptide reads, in one-letter code: Phenylalanine--tRNA ligase alpha subunit (327 aa).

E252 contacts Mg(2+).

The protein belongs to the class-II aminoacyl-tRNA synthetase family. Phe-tRNA synthetase alpha subunit type 1 subfamily. Tetramer of two alpha and two beta subunits. It depends on Mg(2+) as a cofactor.

The protein localises to the cytoplasm. It catalyses the reaction tRNA(Phe) + L-phenylalanine + ATP = L-phenylalanyl-tRNA(Phe) + AMP + diphosphate + H(+). The protein is Phenylalanine--tRNA ligase alpha subunit of Yersinia pestis bv. Antiqua (strain Antiqua).